A 1555-amino-acid polypeptide reads, in one-letter code: Probable serine/threonine-protein kinase DDB_G0276181 (1555 aa).

Disordered regions lie at residues Met-1–Phe-54, Ile-138–Leu-208, Lys-342–Phe-452, Thr-486–Leu-508, and Asn-781–Thr-850. Low complexity-rich tracts occupy residues Asn-14–Ser-53, Ile-138–Asn-205, Ser-359–Gly-378, and Asn-395–Pro-431. Positions Gln-58–Ser-238 constitute a PH domain. Positions Arg-437–Phe-452 are enriched in polar residues. 2 stretches are compositionally biased toward low complexity: residues Thr-486–Asn-504 and Asn-781–Asn-832. Positions Gly-833–Thr-850 are enriched in polar residues. The region spanning Val-986–Ile-1309 is the Protein kinase domain. Leu-992–Ile-1000 lines the ATP pocket. The segment at Arg-1012 to His-1031 is disordered. Lys-1061 is an ATP binding site. Asp-1156 functions as the Proton acceptor in the catalytic mechanism. The segment covering Val-1340–Leu-1376 has biased composition (low complexity). Disordered regions lie at residues Val-1340 to Asn-1383 and Lys-1457 to Arg-1480.

Belongs to the protein kinase superfamily. TKL Ser/Thr protein kinase family.

The enzyme catalyses L-seryl-[protein] + ATP = O-phospho-L-seryl-[protein] + ADP + H(+). It catalyses the reaction L-threonyl-[protein] + ATP = O-phospho-L-threonyl-[protein] + ADP + H(+). This Dictyostelium discoideum (Social amoeba) protein is Probable serine/threonine-protein kinase DDB_G0276181.